Reading from the N-terminus, the 224-residue chain is Thiamine-triphosphatase (224 aa).

An N-acetylalanine modification is found at Ala2. Residues 5–201 enclose the CYTH domain; that stretch reads LIEVERKFTP…AKLLVYLQRF (197 aa). Residues Glu7 and Glu9 each contribute to the Mg(2+) site. Substrate is bound by residues Lys11, Arg55, Arg57, Lys65, and Arg125. Positions 145, 157, and 159 each coordinate Mg(2+). Glu157 contributes to the substrate binding site. Lys193 contributes to the substrate binding site.

This sequence belongs to the ThTPase family. Monomer. It depends on Mg(2+) as a cofactor.

The protein resides in the cytoplasm. The catalysed reaction is thiamine triphosphate + H2O = thiamine diphosphate + phosphate + H(+). Functionally, hydrolase highly specific for thiamine triphosphate (ThTP). This chain is Thiamine-triphosphatase (Thtpa), found in Rattus norvegicus (Rat).